The following is a 436-amino-acid chain: Retinoic acid receptor RXR (436 aa).

The tract at residues 1-108 (MDRSEGMDTL…GPSPSPGLPH (108 aa)) is disordered. Residues 1-116 (MDRSEGMDTL…PHSSLHTKHI (116 aa)) form a modulating region. The span at 13–22 (SMPSGMSMGM) shows a compositional bias: low complexity. 2 stretches are compositionally biased toward polar residues: residues 40-49 (SSLTSPTSTH) and 62-76 (MASSTQPSPGPQQMH). The segment covering 85–98 (SSMGSPPMLCLSPS) has biased composition (low complexity). 2 consecutive NR C4-type zinc fingers follow at residues 117–137 (CAICGDRASGKHYGVYSCEGC) and 153–172 (CRDDKNCMIDKRQRNRCQYC). The nuclear receptor DNA-binding region spans 117 to 182 (CAICGDRASG…RYMKCLSMGM (66 aa)). The interval 183 to 206 (KREAVQEERQRVKEKGDGEVESTS) is hinge. Residues 189-200 (EERQRVKEKGDG) are compositionally biased toward basic and acidic residues. The disordered stretch occupies residues 189-209 (EERQRVKEKGDGEVESTSGAN). The NR LBD domain maps to 209–432 (NNDMPVEQIL…TFLMEMLENP (224 aa)). 9-cis-retinoate-binding residues include R290 and A301.

It belongs to the nuclear hormone receptor family. NR2 subfamily. As to quaternary structure, homodimer (via ligand-binding domain). Heterodimer. Homotetramer consisting of 2 canonical homodimers. Within the tetramer, each monomer binds one molecule of 9C-RA and a NCOA1-derived peptide containing an L-X(2)-L-L motif.

The protein resides in the nucleus. Functionally, ligand-dependent transcription factor probably involved in the retinoic acid response pathway. Binds 9-cis-retinoic acid (9C-RA) and, to a lesser extent, docosahexaenoic acid (DHA), phytanic acid, methoprene acid and oleic acid. Binds to double-stranded DNA sequences containing direct repeats (DR) with the consensus sequence 5'-[AG]GGTCA-3' and 1, 2, 3, 4 or 5 nucleotides in between (DR1, DR2, DR3. DR4 and DR5, respectively). Binding to DR1 is strongest. Transactivates gene expression when 9C-RA or DHA is bound. The chain is Retinoic acid receptor RXR from Biomphalaria glabrata (Bloodfluke planorb).